We begin with the raw amino-acid sequence, 1407 residues long: JmjC domain-containing histone demethylation protein 1 (1407 aa).

2 disordered regions span residues 1–86 and 98–151; these read MISA…SSTI and PTFT…NAFS. Basic and acidic residues-rich tracts occupy residues 55 to 67 and 125 to 140; these read DHVR…KRPS and PVER…RDES. The segment covering 141-150 has biased composition (polar residues); that stretch reads SYTQHRSNAF. A PHD-type zinc finger spans residues 323–382; the sequence is QASCATCNLVRIPVDNEDQDVTWISCDGCKRWFHIVCAGFKNDRETRTVDKFICKTCRPI. One can recognise a JmjC domain in the interval 577-735; the sequence is VSQSKLGRLI…MQIKIAKIEK (159 aa). Residue T628 participates in substrate binding. Residues H631 and D633 each coordinate Fe cation. A substrate-binding site is contributed by K648. Fe cation is bound at residue H703. Disordered stretches follow at residues 893–987, 1004–1027, 1122–1183, and 1252–1389; these read KLSL…LGPK, KEEN…HHTP, IKAQ…QDSV, and DEMD…SLRL. 2 stretches are compositionally biased toward basic and acidic residues: residues 896 to 914 and 928 to 938; these read LAEK…RNAD and LSERPAVDIQK. Positions 1008 to 1027 are enriched in polar residues; that stretch reads NGASGSQMTVSTSSLGHHTP. Residues 1254 to 1264 show a composition bias toward basic and acidic residues; that stretch reads MDIHDQVDAGG. The segment covering 1273-1284 has biased composition (low complexity); it reads PSSGSRQSSRQP. Residues 1285-1296 are compositionally biased toward basic and acidic residues; that stretch reads RQVERYMPEVHF. The span at 1297-1349 shows a compositional bias: low complexity; sequence AKTAKSTTTTPQTTRRSSFGSSGRKTTPGLSSGSKKSGSRPSSSHGKKSLSPS.

Belongs to the JHDM1 histone demethylase family. It depends on Fe(2+) as a cofactor.

The protein localises to the nucleus. It carries out the reaction N(6),N(6)-dimethyl-L-lysyl(36)-[histone H3] + 2 2-oxoglutarate + 2 O2 = L-lysyl(36)-[histone H3] + 2 formaldehyde + 2 succinate + 2 CO2. In terms of biological role, histone demethylase that specifically demethylates 'Lys-36' of histone H3, thereby playing a central role in histone code. The sequence is that of JmjC domain-containing histone demethylation protein 1 (jhd1) from Emericella nidulans (strain FGSC A4 / ATCC 38163 / CBS 112.46 / NRRL 194 / M139) (Aspergillus nidulans).